We begin with the raw amino-acid sequence, 587 residues long: Phosphatidate phosphatase APP1 (587 aa).

2 disordered regions span residues 1–28 (MNSQ…RMGK) and 150–178 (PPHL…SENR). 2 stretches are compositionally biased toward low complexity: residues 9–22 (SSSS…PTSG) and 163–174 (SQSSIESSLSSK). The DXDXT motif signature appears at 281 to 285 (DIDDT). The tract at residues 452-521 (QQRPMQMTKS…NRQLPNLDAN (70 aa)) is disordered. The tract at residues 467–483 (RRPPPPPIPSTQKPSLT) is interaction with SH3 domain of ABP1.

Monomer. Interacts with ABP1. Mg(2+) serves as cofactor. N-glycosylated.

It is found in the cytoplasm. Its subcellular location is the cytoskeleton. The protein resides in the actin patch. The enzyme catalyses a 1,2-diacyl-sn-glycero-3-phosphate + H2O = a 1,2-diacyl-sn-glycerol + phosphate. It carries out the reaction 1,2-di-(9Z-octadecenoyl)-sn-glycero-3-phosphate + H2O = 1,2-di-(9Z-octadecenoyl)-sn-glycerol + phosphate. Its activity is regulated as follows. Inhibited by N-ethylmaleimide. Functionally, mg(2+)-dependent phosphatidate (PA) phosphatase which catalyzes the dephosphorylation of PA to yield diacylglycerol. May play a role in vesicular trafficking through its PAP activity at cortical actin patches. Can also utilize diacylglycerol pyrophosphate and lyso-PA as substrates with specificity constants 4- and 7-fold lower, respectively, when compared with PA. The chain is Phosphatidate phosphatase APP1 (APP1) from Saccharomyces cerevisiae (strain ATCC 204508 / S288c) (Baker's yeast).